The primary structure comprises 321 residues: MAAATRGCRPWGSLLGLLGLVSAAAAAWDLASLRCTLGAFCECDFRPDLPGLECDLAQHLAGQHLAKALVVKALKAFVRDPAPTKPLVLSLHGWTGTGKSYVSSLLAHYLFQGGLRSPRVHHFSPVLHFPHPSHIERYKKDLKSWVQGNLTACGRSLFLFDEMDKMPPGLMEVLRPFLGSSWVVYGTNYRKAIFIFISNTGGKQINQVALEAWRSRRDREEILLQELEPVISRAVLDNPHHGFSNSGIMEERLLDAVVPFLPLQRHHVRHCVLNELAQLGLEPRDEVVQAVLDSTTFFPEDEQLFSSNGCKTVASRIAFFL.

A signal peptide spans 1 to 26 (MAAATRGCRPWGSLLGLLGLVSAAAA). An ATP-binding site is contributed by 93–100 (GWTGTGKS). The N-linked (GlcNAc...) asparagine glycan is linked to asparagine 149.

It belongs to the ClpA/ClpB family. Torsin subfamily. As to quaternary structure, homohexamer. Interacts with TOR1AIP1. Isoform 1 is expressed ubiquitously, except in cardiac and endothelial tissues.

Its subcellular location is the endoplasmic reticulum lumen. The protein is Torsin-2A (TOR2A) of Homo sapiens (Human).